A 144-amino-acid polypeptide reads, in one-letter code: Granulocyte-macrophage colony-stimulating factor (144 aa).

An N-terminal signal peptide occupies residues M1–S17. S24 carries an O-linked (GalNAc...) serine glycan. O-linked (GalNAc...) threonine glycosylation is present at T27. 3 N-linked (GlcNAc...) asparagine glycosylation sites follow: N44, N47, and N54. 2 disulfides stabilise this stretch: C71-C113 and C105-C138.

The protein belongs to the GM-CSF family. In terms of assembly, monomer. The signaling GM-CSF receptor complex is a dodecamer of two head-to-head hexamers of two alpha, two beta, and two ligand subunits.

The protein localises to the secreted. Cytokine that stimulates the growth and differentiation of hematopoietic precursor cells from various lineages, including granulocytes, macrophages, eosinophils and erythrocytes. This Sus scrofa (Pig) protein is Granulocyte-macrophage colony-stimulating factor (CSF2).